Consider the following 185-residue polypeptide: Elongation factor P 1 (185 aa).

It belongs to the elongation factor P family.

The protein localises to the cytoplasm. Its pathway is protein biosynthesis; polypeptide chain elongation. Its function is as follows. Involved in peptide bond synthesis. Stimulates efficient translation and peptide-bond synthesis on native or reconstituted 70S ribosomes in vitro. Probably functions indirectly by altering the affinity of the ribosome for aminoacyl-tRNA, thus increasing their reactivity as acceptors for peptidyl transferase. This Chlamydia caviae (strain ATCC VR-813 / DSM 19441 / 03DC25 / GPIC) (Chlamydophila caviae) protein is Elongation factor P 1 (efp1).